A 117-amino-acid chain; its full sequence is Large ribosomal subunit protein bL20 (117 aa).

The protein belongs to the bacterial ribosomal protein bL20 family.

Functionally, binds directly to 23S ribosomal RNA and is necessary for the in vitro assembly process of the 50S ribosomal subunit. It is not involved in the protein synthesizing functions of that subunit. The protein is Large ribosomal subunit protein bL20 of Aliivibrio fischeri (strain ATCC 700601 / ES114) (Vibrio fischeri).